Consider the following 178-residue polypeptide: 6,7-dimethyl-8-ribityllumazine synthase (178 aa).

5-amino-6-(D-ribitylamino)uracil-binding positions include Phe23, 61-63 (SFE), and 85-87 (AVI). (2S)-2-hydroxy-3-oxobutyl phosphate is bound at residue 90–91 (QT). His93 acts as the Proton donor in catalysis. A 5-amino-6-(D-ribitylamino)uracil-binding site is contributed by Tyr118. A (2S)-2-hydroxy-3-oxobutyl phosphate-binding site is contributed by Arg132.

The protein belongs to the DMRL synthase family.

It carries out the reaction (2S)-2-hydroxy-3-oxobutyl phosphate + 5-amino-6-(D-ribitylamino)uracil = 6,7-dimethyl-8-(1-D-ribityl)lumazine + phosphate + 2 H2O + H(+). Its pathway is cofactor biosynthesis; riboflavin biosynthesis; riboflavin from 2-hydroxy-3-oxobutyl phosphate and 5-amino-6-(D-ribitylamino)uracil: step 1/2. In terms of biological role, catalyzes the formation of 6,7-dimethyl-8-ribityllumazine by condensation of 5-amino-6-(D-ribitylamino)uracil with 3,4-dihydroxy-2-butanone 4-phosphate. This is the penultimate step in the biosynthesis of riboflavin. This is 6,7-dimethyl-8-ribityllumazine synthase from Thermosynechococcus vestitus (strain NIES-2133 / IAM M-273 / BP-1).